The following is a 253-amino-acid chain: Zwei Ig domain protein zig-4 (253 aa).

The first 16 residues, 1 to 16, serve as a signal peptide directing secretion; sequence MFAIALLSFLVVLINA. Ig-like C2-type domains follow at residues 43 to 146 and 162 to 245; these read PAKI…AEVE and PEIV…TFLY. 2 disulfide bridges follow: Cys67–Cys130 and Cys183–Cys229.

In terms of tissue distribution, expressed in PVT, ASK, BAG, M2 and ASI neurons. In L1 larvae, expressed in pharyngeal ectoderm and mesoderm.

It is found in the secreted. Functionally, required for maintaining axon position of PVQ and PVP neurons postembryonically in the ventral nerve cord (VNC) by preventing axons drifting into the opposite side of the VNC that could occur during body growth and movement. The polypeptide is Zwei Ig domain protein zig-4 (Caenorhabditis elegans).